The chain runs to 535 residues: Proto-oncogene tyrosine-protein kinase Src (535 aa).

Residues 1 to 56 (MGSNKSKPKDASQRRRSLEPSENVHGAGGAFPASQTPSKPASADGHRGPSAAFVPP) form a disordered region. The N-myristoyl glycine moiety is linked to residue G2. Over residues 7-19 (KPKDASQRRRSLE) the composition is skewed to basic and acidic residues. Phosphoserine occurs at positions 17, 21, and 74. The SH3 domain maps to 83–144 (GGVTTFVALY…PSNYVAPSDS (62 aa)). An SH2 domain is found at 150-247 (WYFGKITRRE…GLCHRLTTVC (98 aa)). Residue Y186 is modified to Phosphotyrosine. The 254-residue stretch at 269–522 (LRLEVKLGQG…YLQAFLEDYF (254 aa)) folds into the Protein kinase domain. Residues 275–283 (LGQGCFGEV) and K297 each bind ATP. The active-site Proton acceptor is D388. Position 418 is a phosphotyrosine; by autocatalysis (Y418). Y418 bears the Phosphotyrosine; by FAK2 mark. The residue at position 529 (Y529) is a Phosphotyrosine; by CSK.

The protein belongs to the protein kinase superfamily. Tyr protein kinase family. SRC subfamily. Part of a complex comprised of PTPRA, BCAR1, BCAR3 (via SH2 domain) and SRC; the formation of the complex is dependent on integrin mediated-tyrosine phosphorylation of PTPRA. Interacts with CDCP1, TGFB1I1 and TOM1L2. Interacts with DDEF1/ASAP1 via its SH3 domain. Interacts with CCPG1. Interacts with the cytoplasmic domain of MUC1, phosphorylates it and increases binding of MUC1 with beta-catenin. Interacts with RALGPS1 via its SH3 domain. Interacts with CAV2 (tyrosine phosphorylated form). Interacts (via the SH3 domain and the protein kinase domain) with ARRB1; the interaction is independent of the phosphorylation state of SRC C-terminus. Interacts with FCAMR and PXN. Interacts with ARRB2. Interacts with ARRB1. Interacts with SRCIN1. Interacts with NDFIP2 and more weakly with NDFIP1. Interacts with PIK3CA and/or PIK3C2B, PTK2/FAK1, ESR1 (dimethylated on arginine) and FAK. Interacts (via SH2 and SH3 domain) with TNK2. Interacts (via protein kinase domain) with the tyrosine phosphorylated form of RUNX3 (via runt domain). Interacts with TRAF3 (via RING-type zinc finger domain). Interacts with RIGI, MAVS and TBK1. Interacts (via SH2 domain) with RACK1; the interaction is enhanced by tyrosine phosphorylation of RACK1 and inhibits SRC activity. Interacts (via SH2 domain) with the 'Tyr-402' phosphorylated form of PTK2B/PYK2. Interacts (via SH2 domain) with FLT3 (tyrosine phosphorylated). Identified in a complex containing FGFR4, NCAM1, CDH2, PLCG1, FRS2, SRC, SHC1, GAP43 and CTTN. Interacts with EPHB1; activates the MAPK/ERK cascade to regulate cell migration. Interacts with ERBB2 and STAT1. Interacts with PDGFRA (tyrosine phosphorylated). Interacts with CSF1R. Interacts (via SH2 domain) with the 'Tyr-9' phosphorylated form of PDPK1. Interacts with DDR2. Interacts with AMOTL2; this interaction regulates the translocation of phosphorylated SRC to peripheral cell-matrix adhesion sites. Interacts with DDR1 and DAB2. Interacts with TRAP1. Interacts with CBLC; the interaction is enhanced when SRC is phosphorylated at 'Tyr-424'. Interacts with ARHGEF5. Interacts (via cytoplasmic domain) with CEACAM1 (via SH2 domain); this interaction is regulated by trans-homophilic cell adhesion. Interacts with MPP2. Interacts with PRR7. Interacts (via kinase domain and to a lesser extent the SH2 domain) directly with PDLIM4; this interaction results in PTPN13-mediated dephosphorylation of this protein leading to its inactivation. Interacts with P85 (PIK3R1 or PIK3R2). Interacts with HNRNPA2B1. Interacts with IL6ST/gp130. Interacts (via SH3 domain) with PELP1 in the presence of 17-beta-estradiol. Interacts with AMBRA1. In terms of processing, myristoylated at Gly-2, and this is essential for targeting to membranes. Post-translationally, dephosphorylated at Tyr-529 by PTPRJ. Phosphorylated on Tyr-529 by c-Src kinase (CSK). The phosphorylated form is termed pp60c-src. Dephosphorylated by PTPRJ at Tyr-418. Normally maintained in an inactive conformation with the SH2 domain engaged with Tyr-529, the SH3 domain engaged with the SH2-kinase linker, and Tyr-418 dephosphorylated. Dephosphorylation of Tyr-529 as a result of protein tyrosine phosphatase (PTP) action disrupts the intramolecular interaction between the SH2 domain and Tyr-529, Tyr-418 can then become autophosphorylated, resulting in SRC activation. Phosphorylation of Tyr-529 by CSK allows this interaction to reform, resulting in SRC inactivation. CDK5-mediated phosphorylation at Ser-74 targets SRC to ubiquitin-dependent degradation and thus leads to cytoskeletal reorganization. Phosphorylated by PTK2/FAK1; this enhances kinase activity. Phosphorylated by PTK2B/PYK2; this enhances kinase activity. Upon activation of IL6ST by IL6, Tyr-418 is phosphorylated and Tyr-529 dephosphorylated. Displays reduced levels of autophosphorylation at Tyr-418 compared to isoform 2. In terms of processing, displays enhanced levels of autophosphorylation at Tyr-418 compared to isoform 1. Post-translationally, S-nitrosylation is important for activation of its kinase activity. Ubiquitinated in response to CDK5-mediated phosphorylation. Ubiquitination mediated by CBLC requires SRC autophosphorylation at Tyr-418 and may lead to lysosomal degradation.

Its subcellular location is the cell membrane. The protein localises to the mitochondrion inner membrane. It is found in the nucleus. The protein resides in the cytoplasm. It localises to the cytoskeleton. Its subcellular location is the perinuclear region. The protein localises to the cell junction. It is found in the focal adhesion. The enzyme catalyses L-tyrosyl-[protein] + ATP = O-phospho-L-tyrosyl-[protein] + ADP + H(+). Phosphorylation by CSK at Tyr-529 inhibits kinase activity. Inhibitory phosphorylation at Tyr-529 is enhanced by heme. Further phosphorylation by CDK1 partially reactivates CSK-inactivated SRC and facilitates complete reactivation by protein tyrosine phosphatase PTPRC. Integrin engagement stimulates kinase activity. Phosphorylation by PTK2/FAK1 enhances kinase activity. Butein and pseudosubstrate-based peptide inhibitors like CIYKYYF act as inhibitors. Phosphorylation at Tyr-418 increases kinase activity. Non-receptor protein tyrosine kinase which is activated following engagement of many different classes of cellular receptors including immune response receptors, integrins and other adhesion receptors, receptor protein tyrosine kinases, G protein-coupled receptors as well as cytokine receptors. Participates in signaling pathways that control a diverse spectrum of biological activities including gene transcription, immune response, cell adhesion, cell cycle progression, apoptosis, migration, and transformation. Due to functional redundancy between members of the SRC kinase family, identification of the specific role of each SRC kinase is very difficult. SRC appears to be one of the primary kinases activated following engagement of receptors and plays a role in the activation of other protein tyrosine kinase (PTK) families. Receptor clustering or dimerization leads to recruitment of SRC to the receptor complexes where it phosphorylates the tyrosine residues within the receptor cytoplasmic domains. Plays an important role in the regulation of cytoskeletal organization through phosphorylation of specific substrates such as AFAP1. Phosphorylation of AFAP1 allows the SRC SH2 domain to bind AFAP1 and to localize to actin filaments. Cytoskeletal reorganization is also controlled through the phosphorylation of cortactin (CTTN). When cells adhere via focal adhesions to the extracellular matrix, signals are transmitted by integrins into the cell resulting in tyrosine phosphorylation of a number of focal adhesion proteins, including PTK2/FAK1 and paxillin (PXN). In addition to phosphorylating focal adhesion proteins, SRC is also active at the sites of cell-cell contact adherens junctions and phosphorylates substrates such as beta-catenin (CTNNB1), delta-catenin (CTNND1), and plakoglobin (JUP). Another type of cell-cell junction, the gap junction, is also a target for SRC, which phosphorylates connexin-43 (GJA1). SRC is implicated in regulation of pre-mRNA-processing and phosphorylates RNA-binding proteins such as KHDRBS1. Phosphorylates PKP3 at 'Tyr-195' in response to reactive oxygen species, which may cause the release of PKP3 from desmosome cell junctions into the cytoplasm. Also plays a role in PDGF-mediated tyrosine phosphorylation of both STAT1 and STAT3, leading to increased DNA binding activity of these transcription factors. Involved in the RAS pathway through phosphorylation of RASA1 and RASGRF1. Plays a role in EGF-mediated calcium-activated chloride channel activation. Required for epidermal growth factor receptor (EGFR) internalization through phosphorylation of clathrin heavy chain (CLTC and CLTCL1) at 'Tyr-1477'. Involved in beta-arrestin (ARRB1 and ARRB2) desensitization through phosphorylation and activation of GRK2, leading to beta-arrestin phosphorylation and internalization. Has a critical role in the stimulation of the CDK20/MAPK3 mitogen-activated protein kinase cascade by epidermal growth factor. Might be involved not only in mediating the transduction of mitogenic signals at the level of the plasma membrane but also in controlling progression through the cell cycle via interaction with regulatory proteins in the nucleus. Plays an important role in osteoclastic bone resorption in conjunction with PTK2B/PYK2. Both the formation of a SRC-PTK2B/PYK2 complex and SRC kinase activity are necessary for this function. Recruited to activated integrins by PTK2B/PYK2, thereby phosphorylating CBL, which in turn induces the activation and recruitment of phosphatidylinositol 3-kinase to the cell membrane in a signaling pathway that is critical for osteoclast function. Promotes energy production in osteoclasts by activating mitochondrial cytochrome C oxidase. Phosphorylates DDR2 on tyrosine residues, thereby promoting its subsequent autophosphorylation. Phosphorylates RUNX3 and COX2 on tyrosine residues, TNK2 on 'Tyr-284' and CBL on 'Tyr-738'. Enhances RIGI-elicited antiviral signaling. Phosphorylates PDPK1 at 'Tyr-9', 'Tyr-373' and 'Tyr-376'. Phosphorylates BCAR1 at 'Tyr-226'. Phosphorylates CBLC at multiple tyrosine residues, phosphorylation at 'Tyr-341' activates CBLC E3 activity. Phosphorylates synaptic vesicle protein synaptophysin (SYP). Involved in anchorage-independent cell growth. Required for podosome formation. Mediates IL6 signaling by activating YAP1-NOTCH pathway to induce inflammation-induced epithelial regeneration. Phosphorylates OTUB1, promoting deubiquitination of RPTOR. Its function is as follows. Non-receptor protein tyrosine kinase which phosphorylates synaptophysin with high affinity. In terms of biological role, non-receptor protein tyrosine kinase which shows higher basal kinase activity than isoform 1, possibly due to weakened intramolecular interactions which enhance autophosphorylation of Tyr-418 and subsequent activation. The SH3 domain shows reduced affinity with the linker sequence between the SH2 and kinase domains which may account for the increased basal activity. Displays altered substrate specificity compared to isoform 1, showing weak affinity for synaptophysin and for peptide substrates containing class I or class II SH3 domain-binding motifs. Plays a role in L1CAM-mediated neurite elongation, possibly by acting downstream of L1CAM to drive cytoskeletal rearrangements involved in neurite outgrowth. The polypeptide is Proto-oncogene tyrosine-protein kinase Src (Mus musculus (Mouse)).